The primary structure comprises 476 residues: Stromelysin-2 (476 aa).

A signal peptide spans 1-17 (MEPLAILALLSLPICSA). The propeptide at 18–99 (YPLHGAVTQG…PRCGVPDVGG (82 aa)) is activation peptide. The Cysteine switch motif lies at 90–97 (PRCGVPDV). Positions 92, 168, 170, 183, 196, and 218 each coordinate Zn(2+). The active site involves glutamate 219. Zn(2+) is bound by residues histidine 222 and histidine 228. 4 Hemopexin repeats span residues 286–335 (PDKC…WPTL), 336–382 (PSDL…GFPP), 384–432 (VKKI…FPGI), and 433–476 (EPQV…WLLC). Cysteine 289 and cysteine 476 are joined by a disulfide.

The protein belongs to the peptidase M10A family. Zn(2+) serves as cofactor. Ca(2+) is required as a cofactor. Expressed in small intestine. Weak levels in heart and lung.

Its subcellular location is the secreted. It is found in the extracellular space. The protein resides in the extracellular matrix. The catalysed reaction is Similar to stromelysin 1, but action on collagen types III, IV and V is weak.. Its function is as follows. Can degrade fibronectin, gelatins of type I, III, IV, and V; weakly collagens III, IV, and V. Activates procollagenase. The sequence is that of Stromelysin-2 (Mmp10) from Mus musculus (Mouse).